Consider the following 462-residue polypeptide: Stabilizer of axonemal microtubules 1 (462 aa).

12 mn regions span residues 30–64, 65–97, 98–131, 132–165, 166–199, 200–232, 233–266, 267–299, 300–332, 333–366, 367–400, and 401–434; these read KPCFFSEYTEKYPTYLSYVPRESFKPKLEYQKVNI, PMEGLSTTKRDFGTFNIVPVKHHLPEKATPIQD, EMDFLTTYNQHYNYCPANRVNPIKPRDNKHQCND, KMECVPTYKADYLPWNQQKRSSIRPPQSYRPASC, RFDHRTTHQDDYPIKNPVDTVSYKPPHGPKLCNI, PLESMTSYKSSYVAHPMEKRCVYEGEKYKPSEV, PFDSLTTHKDSYRGLIGEPAKTWKPAPNHPGLDI, PFPSNTEFREKFQPWPTPKIVPKESIAYIPPEG, KMDLLTTVQADYKCPNGVPAQSCRPVIHLKKSD, RFESSTTNREDFKHWANIRREPVKPNHQLKFSDE, PMEYMTTNRAHYVPHAPANTKSCKPTWSGPRVNI, and PLEGQTTYSTSFTPKEIQRCPASYPEPPGYIFDE.

Belongs to the FAM154 family. Associates with microtubules via the Mn regions.

The protein localises to the cytoplasm. It localises to the cytoskeleton. It is found in the microtubule organizing center. Its subcellular location is the centrosome. The protein resides in the centriole. The protein localises to the cilium basal body. It localises to the cilium axoneme. In terms of biological role, may play a role in the regulation of cilium length. Stabilizes microtubules at low temperature. The chain is Stabilizer of axonemal microtubules 1 (Saxo1) from Rattus norvegicus (Rat).